The sequence spans 676 residues: Transcription factor RLM1 (676 aa).

Residues 3–57 (RRKIEIQRISDDRNRAVTFIKRKAGLFKKAHELSVLCQVDIAVIILGSNNTFYEF) form the MADS-box domain. The segment at residues 58–87 (SSVDTNDLIYHYQNDKNLLHEVKDPSDYGD) is a DNA-binding region (mef2-type). Over residues 103–120 (SSMSNKPSKSNVKGMNQS) the composition is skewed to polar residues. The segment at 103–156 (SSMSNKPSKSNVKGMNQSENDDDENNDEDDDDHGNFERNSNMHSNKKASDKNIP) is disordered. S120 bears the Phosphoserine mark. Residues 121 to 134 (ENDDDENNDEDDDD) show a composition bias toward acidic residues. The residue at position 164 (S164) is a Phosphoserine. The segment covering 173-183 (DGSEQNKRHPE) has biased composition (basic and acidic residues). Disordered regions lie at residues 173–192 (DGSEQNKRHPENALPPLQHL), 202–318 (ISRT…RRKL), 330–424 (NNNF…PFGS), 472–514 (KKQS…VHDL), and 532–631 (MGPN…NSST). Residues 260–276 (ISPNKFSKPFTNASSRT) are compositionally biased toward polar residues. Residues 284–295 (NNSGSNNNDNSN) are compositionally biased toward low complexity. Positions 296-312 (YTQSPSNSLEDSIQQTV) are enriched in polar residues. 3 stretches are compositionally biased toward low complexity: residues 334 to 359 (SSNSAIPSEPSSASSTSANGNSMGSS), 368 to 381 (SRSSKISPLSASAS), and 399 to 417 (PNANAPNGSNNGNGSNNNN). Phosphoserine is present on residues S374 and S377. A compositionally biased stretch (polar residues) spans 472-506 (KKQSQTVPLTTTLTGRPPSTFSGPETSNGPPTGSL). The span at 539–604 (PGNTNNPGTF…NSNNSYYSNN (66 aa)) shows a compositional bias: low complexity. The segment covering 621-631 (GDSNNQSNSST) has biased composition (polar residues).

This sequence belongs to the MEF2 family. In terms of assembly, can heterodimerize with SPM1. Interacts with KDX1 and SLT2. In terms of processing, phosphorylated by SLT2.

Its subcellular location is the nucleus. May function as a transcription factor downstream of MPK1 that is subject to activation by the MPK1 mitogen-activated protein kinase pathway. Binds to the DNA sequence 5'-CTA[TA](4)TAG-3'. At least some RML1 target genes are involved in cell wall biosynthesis. The protein is Transcription factor RLM1 (RLM1) of Saccharomyces cerevisiae (strain ATCC 204508 / S288c) (Baker's yeast).